We begin with the raw amino-acid sequence, 1076 residues long: DNA-directed RNA polymerase subunit beta (1076 aa).

It belongs to the RNA polymerase beta chain family. In plastids the minimal PEP RNA polymerase catalytic core is composed of four subunits: alpha, beta, beta', and beta''. When a (nuclear-encoded) sigma factor is associated with the core the holoenzyme is formed, which can initiate transcription.

It localises to the plastid. It is found in the chloroplast. The enzyme catalyses RNA(n) + a ribonucleoside 5'-triphosphate = RNA(n+1) + diphosphate. In terms of biological role, DNA-dependent RNA polymerase catalyzes the transcription of DNA into RNA using the four ribonucleoside triphosphates as substrates. The sequence is that of DNA-directed RNA polymerase subunit beta from Triticum aestivum (Wheat).